We begin with the raw amino-acid sequence, 361 residues long: tRNA-specific 2-thiouridylase MnmA (361 aa).

ATP-binding positions include 8-15 (AMSGGVDS) and M34. C104 (nucleophile) is an active-site residue. C104 and C202 are joined by a disulfide. ATP is bound at residue G128. The interval 152 to 154 (KDQ) is interaction with tRNA. C202 functions as the Cysteine persulfide intermediate in the catalytic mechanism. The tract at residues 307–308 (RY) is interaction with tRNA.

Belongs to the MnmA/TRMU family.

It is found in the cytoplasm. It catalyses the reaction S-sulfanyl-L-cysteinyl-[protein] + uridine(34) in tRNA + AH2 + ATP = 2-thiouridine(34) in tRNA + L-cysteinyl-[protein] + A + AMP + diphosphate + H(+). In terms of biological role, catalyzes the 2-thiolation of uridine at the wobble position (U34) of tRNA, leading to the formation of s(2)U34. The polypeptide is tRNA-specific 2-thiouridylase MnmA (Caldicellulosiruptor saccharolyticus (strain ATCC 43494 / DSM 8903 / Tp8T 6331)).